The primary structure comprises 265 residues: Probable aquaporin TIP3-2 (265 aa).

2 helical membrane-spanning segments follow: residues 32–52 (LSEF…VYGL) and 62–82 (LGGL…AVAV). Residues 92–94 (NPA) carry the NPA 1 motif. Transmembrane regions (helical) follow at residues 110–130 (AALY…LLRL), 151–171 (ALLL…ATAV), and 179–199 (DIAP…GGPF). Positions 205-207 (NPA) match the NPA 2 motif. Residues 223–243 (WVYWLGPLIGAGMAGALYEFV) form a helical membrane-spanning segment.

Belongs to the MIP/aquaporin (TC 1.A.8) family. TIP (TC 1.A.8.10) subfamily. As to expression, expressed in leaves and at lower levels in roots.

It is found in the vacuole membrane. Its function is as follows. Aquaporins facilitate the transport of water and small neutral solutes across cell membranes. May be involved in transport from the vacuolar compartment to the cytoplasm. The polypeptide is Probable aquaporin TIP3-2 (TIP3-2) (Oryza sativa subsp. japonica (Rice)).